The chain runs to 1124 residues: Transient-receptor-potential-like protein (1124 aa).

The interval 1-24 is disordered; that stretch reads MGRKKKLPTGVSSGVSHASSAPKS. Over 1 to 340 the chain is Cytoplasmic; the sequence is MGRKKKLPTG…GFRRKSIVDK (340 aa). Positions 10–21 are enriched in low complexity; sequence GVSSGVSHASSA. 3 ANK repeats span residues 40–69, 78–107, and 152–181; these read LEEK…RHQH, LGRR…ETKD, and PDIT…AVPV. Residues 341–361 traverse the membrane as a helical segment; sequence VICIAQVAVLFPLYCLIYMCA. The Extracellular segment spans residues 362 to 373; the sequence is PNCRTGQLMRKP. A helical membrane pass occupies residues 374 to 394; the sequence is FMKFLIHASSYLFFLFILILV. At 395-431 the chain is on the cytoplasmic side; sequence SQRADDDFVRIFGTTRMKKELAEQELRQRGQTPSKLE. Residues 432–452 form a helical membrane-spanning segment; the sequence is LIVVMYVIGFVWEEVQEIFAV. The Extracellular segment spans residues 453–512; that stretch reads GMKSYLRNMWNFIDFLRNSLYVSVMCLRAFAYIQQATEIARDPQMAYIPREKWHDFDPQL. The chain crosses the membrane as a helical span at residues 513–533; that stretch reads IAEGLFAAANVFSALKLVHLF. Residues 534-548 lie on the Cytoplasmic side of the membrane; sequence SINPHLGPLQISLGR. Residues 549–569 form a helical membrane-spanning segment; the sequence is MVIDIVKFFFIYTLVLFAFAC. Residues 570–645 lie on the Extracellular side of the membrane; it reads GLNQLLWYFA…GIKSYTRFWG (76 aa). Residues 646 to 666 form a helical membrane-spanning segment; the sequence is LLMFGSYSVINVIVLLNLLIA. Residues 667-1124 are Cytoplasmic-facing; that stretch reads MMSNSYAMID…TSPQRPKHRN (458 aa). 2 calmodulin-binding regions span residues 710–728 and 853–895; these read SVKW…IDRQ and IPSK…SQIG. Disordered stretches follow at residues 978–1013 and 1031–1124; these read RAMA…GVSH and LIAN…KHRN. Residues 1035–1063 show a composition bias toward low complexity; the sequence is SAPSAPTAPPKKSAPTAPTPTYKPTTHAP. Composition is skewed to basic and acidic residues over residues 1069-1081 and 1090-1106; these read GNRE…DGVR and HVVD…RDNV. Over residues 1107 to 1118 the composition is skewed to polar residues; the sequence is SDISSIASTSPQ.

The protein belongs to the transient receptor (TC 1.A.4) family. STrpC subfamily. As to quaternary structure, forms heteromultimers with Trpgamma and, to a lower extent, with trp. Interacts with Fkbp59 in vivo and is found in the inaD signaling complex. In terms of tissue distribution, expressed predominantly in the rhabdomeres of photoreceptor cells.

It localises to the membrane. The protein resides in the cell projection. The protein localises to the rhabdomere membrane. A light-sensitive calcium channel that is required for inositide-mediated Ca(2+) entry in the retina during phospholipase C (PLC)-mediated phototransduction. Required for vision in the dark and in dim light. Binds calmodulin. Trp and trpl act together in the light response, although it is unclear whether as heteromultimers or distinct units. Also forms a functional cation channel with Trpgamma. Activated by fatty acids, metabolic stress, inositols and GTP-binding proteins. The chain is Transient-receptor-potential-like protein (trpl) from Drosophila melanogaster (Fruit fly).